The chain runs to 1265 residues: 1-phosphatidylinositol 4,5-bisphosphate phosphodiesterase gamma-2 (1265 aa).

Residues 20–131 form the PH domain; sequence RALELGTVMT…WLSGLKILHQ (112 aa). Residues 312–456 enclose the PI-PLC X-box domain; the sequence is QDMNNPLSHY…LREKIIIKHK (145 aa). Residues histidine 327 and histidine 372 contribute to the active site. SH2 domains are found at residues 532 to 635 and 646 to 735; these read WFHK…TDPV and WYYD…RYPV. Tyrosine 753 and tyrosine 759 each carry phosphotyrosine; by BTK. Positions 769-829 constitute an SH3 domain; that stretch reads MPQRTVKALY…PSNYVEDIST (61 aa). A PI-PLC Y-box domain is found at 930-1044; sequence LSDLVVYCKP…GYVLQPESMR (115 aa). One can recognise a C2 domain in the interval 1038–1169; it reads LQPESMRTEK…SGFRSVPLKN (132 aa). Tyrosine 1197 is subject to Phosphotyrosine; by BTK. Phosphotyrosine occurs at positions 1217 and 1245.

As to quaternary structure, part of a complex composed of EEIG1, TNFRSF11A/RANK, PLCG2, GAB2, TEC and BTK; complex formation increases in the presence of TNFSF11/RANKL. Interacts (via SH2 domain) with CSF1R (tyrosine phosphorylated). Interacts constitutively with THEMIS2. Ca(2+) is required as a cofactor. In terms of processing, phosphorylated on tyrosine residues by CSF1R. Phosphorylated on tyrosine residues by BTK and SYK; upon ligand-induced activation of a variety of growth factor receptors and immune system receptors. Phosphorylation leads to increased phospholipase activity.

It is found in the membrane raft. The catalysed reaction is a 1,2-diacyl-sn-glycero-3-phospho-(1D-myo-inositol-4,5-bisphosphate) + H2O = 1D-myo-inositol 1,4,5-trisphosphate + a 1,2-diacyl-sn-glycerol + H(+). Its function is as follows. The production of the second messenger molecules diacylglycerol (DAG) and inositol 1,4,5-trisphosphate (IP3) is mediated by activated phosphatidylinositol-specific phospholipase C enzymes. It is a crucial enzyme in transmembrane signaling. The chain is 1-phosphatidylinositol 4,5-bisphosphate phosphodiesterase gamma-2 from Homo sapiens (Human).